We begin with the raw amino-acid sequence, 378 residues long: Erythronate-4-phosphate dehydrogenase (378 aa).

2 residues coordinate substrate: Ser45 and Thr66. The NAD(+) site is built by Asp146 and Thr175. Arg208 is a catalytic residue. Residue Asp232 participates in NAD(+) binding. The active site involves Glu237. His254 serves as the catalytic Proton donor. Residue Gly257 participates in NAD(+) binding. Tyr258 provides a ligand contact to substrate.

Belongs to the D-isomer specific 2-hydroxyacid dehydrogenase family. PdxB subfamily. Homodimer.

Its subcellular location is the cytoplasm. It catalyses the reaction 4-phospho-D-erythronate + NAD(+) = (R)-3-hydroxy-2-oxo-4-phosphooxybutanoate + NADH + H(+). It functions in the pathway cofactor biosynthesis; pyridoxine 5'-phosphate biosynthesis; pyridoxine 5'-phosphate from D-erythrose 4-phosphate: step 2/5. Catalyzes the oxidation of erythronate-4-phosphate to 3-hydroxy-2-oxo-4-phosphonooxybutanoate. This Escherichia coli O6:K15:H31 (strain 536 / UPEC) protein is Erythronate-4-phosphate dehydrogenase.